Reading from the N-terminus, the 47-residue chain is Defensin NsD7 (47 aa).

Disulfide bonds link C3/C47, C14/C34, C20/C41, and C24/C43. A 1,2-diacyl-sn-glycero-3-phosphate is bound by residues K4, H33, K36, and R39.

Belongs to the DEFL family. In the presence of phosphatidic acid (PA), forms right-handed double helices which tend to bundle into fibrils. Each helix is a repetition of dimers containing 2 bound molecules of PA per dimer. Dimers are arranged orthogonally in a tip-to-tip configuration with 1 molecule of PA located at the dimer contact interface. Association of 2 helices to form a double helix depends on intercalating isoleucine residues Ile-15 and Ile-37. Bundling of double helices into fibrils depends on Arg-26.

The protein resides in the vacuole. Plant defense peptide. Disrupts membranes containing phosphatidic acid (PA) via a PA-dependent oligomerization process. In Nicotiana suaveolens (Australian tobacco), this protein is Defensin NsD7.